The following is a 278-amino-acid chain: Potassium/proton antiporter CemA (278 aa).

The next 4 helical transmembrane spans lie at 61-81 (VVFL…FLFG), 154-174 (CAIT…SILI), 203-223 (IILF…EVII), and 238-258 (FIFV…KYWI).

It belongs to the CemA family.

It localises to the plastid. The protein localises to the chloroplast inner membrane. The enzyme catalyses K(+)(in) + H(+)(out) = K(+)(out) + H(+)(in). In terms of biological role, contributes to K(+)/H(+) antiport activity by supporting proton efflux to control proton extrusion and homeostasis in chloroplasts in a light-dependent manner to modulate photosynthesis. Prevents excessive induction of non-photochemical quenching (NPQ) under continuous-light conditions. Indirectly promotes efficient inorganic carbon uptake into chloroplasts. This Gracilaria tenuistipitata var. liui (Red alga) protein is Potassium/proton antiporter CemA.